The sequence spans 450 residues: Interferon-related developmental regulator 1 (450 aa).

The span at 1-10 (MPKNKKRNTP) shows a compositional bias: basic residues. Residues 1-46 (MPKNKKRNTPHRGGSGGGGSGAAATTAATAGGQHRNVQPFSDEDAS) form a disordered region. The span at 22–32 (AAATTAATAGG) shows a compositional bias: low complexity.

The protein belongs to the IFRD family. Interacts with PSIP1/LEDGF.

In terms of biological role, could play a role in regulating gene activity in the proliferative and/or differentiative pathways induced by NGF. May be an autocrine factor that attenuates or amplifies the initial ligand-induced signal. In Sus scrofa (Pig), this protein is Interferon-related developmental regulator 1 (IFRD1).